The primary structure comprises 614 residues: MDKHHHQHLLLQHHQHLHHHQKLSLAKSSRQSCSEWIFRDVPSDITIEVNGGNFALHKFPLVSRSGRIRRIVAEHRDSDISKVELLNLPGGAETFELAAKFCYGINFEITSSNVAQLFCVSDYLEMTEEYSKDNLASRTEEYLESIVCKNLEMCVQVLKQSEILLPLADELNIIGRCIDAIASKACAEQIASSFSRLEYSSSGRLHMSRQVKSSGDGGDWWIEDLSVLRIDLYQRVMNAMKCRGVRPESIGASLVSYAERELTKRSEHEQTIVETIVTLLPVENLVVPISFLFGLLRRAVILDTSVSCRLDLERRLGSQLDMATLDDLLIPSFRHAGDTLFDIDTVHRILVNFSQQGGDDSEDEESVFECDSPHSPSQTAMFKVAKLVDSYLAEIAPDANLDLSKFLLIAEALPPHARTLHDGLYRAIDLYLKAHQGLSDSDKKKLSKLIDFQKLSQEAGAHAAQNERLPLQSIVQVLYFEQLKLRSSLCSSYSDEEPKPKQQQQQSWRINSGALSATMSPKDNYASLRRENRELKLELARLRMRLNDLEKEHICMKRDMQRSHSRKFMSSFSKKMGKLSFFGHSSSRGSSSPSKQSFRTDSKVLMERTCASTD.

The BTB domain maps to 43–111 (SDITIEVNGG…CYGINFEITS (69 aa)). In terms of domain architecture, NPH3 spans 219 to 484 (DWWIEDLSVL…VQVLYFEQLK (266 aa)). Tyr-425 is modified (phosphotyrosine). Disordered stretches follow at residues 492–525 (SYSD…KDNY) and 583–614 (GHSS…ASTD). Polar residues predominate over residues 507–521 (SWRINSGALSATMSP). Residues 522–562 (KDNYASLRRENRELKLELARLRMRLNDLEKEHICMKRDMQR) adopt a coiled-coil conformation. Over residues 583-597 (GHSSSRGSSSPSKQS) the composition is skewed to low complexity.

This sequence belongs to the NPH3 family.

The protein operates within protein modification; protein ubiquitination. May act as a substrate-specific adapter of an E3 ubiquitin-protein ligase complex (CUL3-RBX1-BTB) which mediates the ubiquitination and subsequent proteasomal degradation of target proteins. The sequence is that of BTB/POZ domain-containing protein At5g48800 from Arabidopsis thaliana (Mouse-ear cress).